We begin with the raw amino-acid sequence, 507 residues long: Tryptamine 4-monooxygenase (507 aa).

The N-terminal stretch at 1–19 (MIVLLVSLVLAGCIYYANA) is a signal peptide. The segment at 403–425 (PNPSEFRPERYLSSDGKPDPTVR) is disordered. Basic and acidic residues predominate over residues 408-425 (FRPERYLSSDGKPDPTVR). C439 contacts heme.

The protein belongs to the cytochrome P450 family. Heme is required as a cofactor.

The catalysed reaction is tryptamine + AH2 + O2 = 4-hydroxytryptamine + A + H2O. The protein operates within secondary metabolite biosynthesis. In terms of biological role, tryptamine 4-monooxygenase; part of the gene cluster that mediates the biosynthesis of psilocybin, a psychotropic tryptamine-derived natural product. The first step in the pathway is the decarboxylation of L-tryptophan to tryptamine by the decarboxylase psiD. PsiD does not decarboxylate phenylalanine, tyrosine, or 5-hydroxy- L -tryptophan (5-HTP). 4-hydroxy-L-tryptophan is accepted as substrate by psiD as well. The cytochrome P450 monooxygenase psiH then converts tryptamine to 4-hydroxytryptamine. The kinase psiK catalyzes the 4-O-phosphorylation step by converting 4-hydroxytryptamine into norbaeocystin. The methyltransferase psiM then catalyzes iterative methyl transfer to the amino group of norbaeocystin to yield psilocybin via a monomethylated intermediate, baeocystin. The sequence is that of Tryptamine 4-monooxygenase from Psilocybe cyanescens.